The primary structure comprises 890 residues: Translation initiation factor IF-2 (890 aa).

The segment at 45–304 (LIDHLNQKNS…LQQGFQKPAQ (260 aa)) is disordered. The span at 67-81 (STLNIPGTGGKSKSV) shows a compositional bias: polar residues. The segment covering 92–217 (VKRDPQEAER…RMAEENKWTD (126 aa)) has biased composition (basic and acidic residues). The span at 252-266 (GRGRNAKAARPKKGN) shows a compositional bias: basic residues. Residues 267–280 (KHAESKADREEARA) show a composition bias toward basic and acidic residues. The region spanning 389–558 (PRAPVVTIMG…LLQAEVLELK (170 aa)) is the tr-type G domain. The tract at residues 398–405 (GHVDHGKT) is G1. 398 to 405 (GHVDHGKT) serves as a coordination point for GTP. Residues 423–427 (GITQH) are G2. The G3 stretch occupies residues 444–447 (DTPG). Residues 444-448 (DTPGH) and 498-501 (NKID) contribute to the GTP site. The segment at 498-501 (NKID) is G4. The interval 534-536 (SAK) is G5. At lysine 808 the chain carries N6-acetyllysine.

This sequence belongs to the TRAFAC class translation factor GTPase superfamily. Classic translation factor GTPase family. IF-2 subfamily.

It is found in the cytoplasm. Its function is as follows. One of the essential components for the initiation of protein synthesis. Protects formylmethionyl-tRNA from spontaneous hydrolysis and promotes its binding to the 30S ribosomal subunits. Also involved in the hydrolysis of GTP during the formation of the 70S ribosomal complex. This is Translation initiation factor IF-2 from Escherichia coli (strain SMS-3-5 / SECEC).